The sequence spans 251 residues: Probable transcriptional regulatory protein Cgl1663/cg1872 (251 aa).

Positions 1-22 (MSGHSKWATTKHKKAANDAKRG) are disordered.

It belongs to the TACO1 family.

It is found in the cytoplasm. This is Probable transcriptional regulatory protein Cgl1663/cg1872 from Corynebacterium glutamicum (strain ATCC 13032 / DSM 20300 / JCM 1318 / BCRC 11384 / CCUG 27702 / LMG 3730 / NBRC 12168 / NCIMB 10025 / NRRL B-2784 / 534).